We begin with the raw amino-acid sequence, 970 residues long: ATP-dependent DNA helicase DDX11 (970 aa).

The Helicase ATP-binding domain occupies 9–445 (GAIHFPFPFT…KNLMYLKQIL (437 aa)). 44-51 (SPTGTGKS) serves as a coordination point for ATP. Residue S262 is modified to Phosphoserine. Positions 267 and 285 each coordinate [4Fe-4S] cluster. The segment covering 289-304 (QRSRHEKKKGAEEEKP) has biased composition (basic and acidic residues). The segment at 289-312 (QRSRHEKKKGAEEEKPKRRRQEKQ) is disordered. The [4Fe-4S] cluster site is built by C315 and C350. Residues 393–396 (DEAH) carry the DEAH box motif. The segment at 818–849 (TLSPRPGTPREGSGGEPVHEGRQPVHRQGHQA) is disordered.

Belongs to the DEAD box helicase family. DEAH subfamily. DDX11/CHL1 sub-subfamily. In terms of assembly, associates with the CTF18-RFC complex. Associates with a cohesin complex composed of RAD21, SMC1 proteins and SMC3. Interacts with CHTF18. Interacts with DSCC1. Interacts with FEN1; this interaction is direct and increases flap endonuclease activity of FEN1. Interacts with PCNA. Interacts with POLR1A and UBTF. Interacts with RAD21, SMC1 proteins and SMC3. Interacts with RFC2. Interacts with TIMELESS; this interaction increases recruitment of both proteins onto chromatin in response to replication stress induction by hydroxyurea. (Microbial infection) Interacts with bovine papillomavirus type 1 regulatory protein E2; this interaction stimulates the recruitment of E2 onto mitotic chromosomes. Requires Mg(2+) as cofactor. [4Fe-4S] cluster is required as a cofactor. In terms of tissue distribution, expressed in melanoma cells. Not detected in epidermal melanocytes of normal skin (at protein level). Highly expressed in spleen, B-cells, thymus, testis, ovary, small intestine and pancreas. Very low expression seen in brain. Expressed in dividing cells and/or cells undergoing high levels of recombination. No expression detected in cells signaled to terminally differentiate. Expressed weakly in keratinocytes.

It localises to the nucleus. It is found in the nucleolus. The protein resides in the cytoplasm. Its subcellular location is the cytoskeleton. The protein localises to the spindle pole. It localises to the midbody. It is found in the microtubule organizing center. The protein resides in the centrosome. Its subcellular location is the chromosome. It catalyses the reaction Couples ATP hydrolysis with the unwinding of duplex DNA at the replication fork by translocating in the 5'-3' direction. This creates two antiparallel DNA single strands (ssDNA). The leading ssDNA polymer is the template for DNA polymerase III holoenzyme which synthesizes a continuous strand.. The catalysed reaction is ATP + H2O = ADP + phosphate + H(+). Its activity is regulated as follows. ATPase activity is stimulated by high magnesium salt levels (up to a 0.1 M), and potassium salts (glutamate, chloride or acetate) are more effective than the corresponding sodium salts. ATPase activity is enhanced by the long non-coding RNA (lncRNA) cohesion regulator noncoding RNA (CONCR). Double-stranded DNA helicase activity is maximal with magnesium ions at low concentrations (0.5-1 mM) whereas is markedly inhibited at higher levels (5 mM and above). Double-stranded DNA helicase activity is stimulated by 25-50 mM potassium acetate, stimulated to a lesser extent by 25 mM of ammonium acetate, and markedly inhibited by sodium acetate. In terms of biological role, DNA-dependent ATPase and ATP-dependent DNA helicase that participates in various functions in genomic stability, including DNA replication, DNA repair and heterochromatin organization as well as in ribosomal RNA synthesis. Its double-stranded DNA helicase activity requires either a minimal 5'-single-stranded tail length of approximately 15 nt (flap substrates) or 10 nt length single-stranded gapped DNA substrates of a partial duplex DNA structure for helicase loading and translocation along DNA in a 5' to 3' direction. The helicase activity is capable of displacing duplex regions up to 100 bp, which can be extended up to 500 bp by the replication protein A (RPA) or the cohesion CTF18-replication factor C (Ctf18-RFC) complex activities. Also shows ATPase- and helicase activities on substrates that mimic key DNA intermediates of replication, repair and homologous recombination reactions, including forked duplex, anti-parallel G-quadruplex and three-stranded D-loop DNA molecules. Plays a role in DNA double-strand break (DSB) repair at the DNA replication fork during DNA replication recovery from DNA damage. Recruited with TIMELESS factor upon DNA-replication stress response at DNA replication fork to preserve replication fork progression, and hence ensure DNA replication fidelity. Also cooperates with TIMELESS factor during DNA replication to regulate proper sister chromatid cohesion and mitotic chromosome segregation. Stimulates 5'-single-stranded DNA flap endonuclease activity of FEN1 in an ATP- and helicase-independent manner; and hence it may contribute in Okazaki fragment processing at DNA replication fork during lagging strand DNA synthesis. Its ability to function at DNA replication fork is modulated by its binding to long non-coding RNA (lncRNA) cohesion regulator non-coding RNA DDX11-AS1/CONCR, which is able to increase both DDX11 ATPase activity and binding to DNA replicating regions. Also plays a role in heterochromatin organization. Involved in rRNA transcription activation through binding to active hypomethylated rDNA gene loci by recruiting UBTF and the RNA polymerase Pol I transcriptional machinery. Plays a role in embryonic development and prevention of aneuploidy. Involved in melanoma cell proliferation and survival. Associates with chromatin at DNA replication fork regions. Binds to single- and double-stranded DNAs. Its function is as follows. (Microbial infection) Required for bovine papillomavirus type 1 regulatory protein E2 loading onto mitotic chromosomes during DNA replication for the viral genome to be maintained and segregated. This Homo sapiens (Human) protein is ATP-dependent DNA helicase DDX11.